A 536-amino-acid chain; its full sequence is CTP synthase (536 aa).

The tract at residues 1–267 (MTKYIFVTGG…DQIVCDHLKL (267 aa)) is amidoligase domain. S13 provides a ligand contact to CTP. S13 contributes to the UTP binding site. 14–19 (SIGKGI) contributes to the ATP binding site. Y54 contacts L-glutamine. Position 71 (D71) interacts with ATP. Mg(2+) is bound by residues D71 and E141. CTP contacts are provided by residues 148 to 150 (DIE), 188 to 193 (KTKPTQ), and K224. Residues 188–193 (KTKPTQ) and K224 each bind UTP. In terms of domain architecture, Glutamine amidotransferase type-1 spans 292–535 (KIALVGKYVE…ITAAVENSQA (244 aa)). G354 provides a ligand contact to L-glutamine. The Nucleophile; for glutamine hydrolysis role is filled by C381. L-glutamine-binding positions include 382–385 (LGMQ), E405, and R463. Catalysis depends on residues H508 and E510.

The protein belongs to the CTP synthase family. As to quaternary structure, homotetramer.

It carries out the reaction UTP + L-glutamine + ATP + H2O = CTP + L-glutamate + ADP + phosphate + 2 H(+). It catalyses the reaction L-glutamine + H2O = L-glutamate + NH4(+). The enzyme catalyses UTP + NH4(+) + ATP = CTP + ADP + phosphate + 2 H(+). Its pathway is pyrimidine metabolism; CTP biosynthesis via de novo pathway; CTP from UDP: step 2/2. Its activity is regulated as follows. Allosterically activated by GTP, when glutamine is the substrate; GTP has no effect on the reaction when ammonia is the substrate. The allosteric effector GTP functions by stabilizing the protein conformation that binds the tetrahedral intermediate(s) formed during glutamine hydrolysis. Inhibited by the product CTP, via allosteric rather than competitive inhibition. Catalyzes the ATP-dependent amination of UTP to CTP with either L-glutamine or ammonia as the source of nitrogen. Regulates intracellular CTP levels through interactions with the four ribonucleotide triphosphates. This is CTP synthase from Streptococcus mutans serotype c (strain ATCC 700610 / UA159).